The chain runs to 279 residues: Four and a half LIM domains protein 2 (279 aa).

The segment at 7 to 31 (CHHCNESLFGKKYILREESPYCVVC) adopts a C4-type zinc-finger fold. 3 LIM zinc-binding domains span residues 40–92 (CEEC…CTDC), 101–153 (CQEC…CVPC), and 162–212 (CVQC…CLNC). K78 participates in a covalent cross-link: Glycyl lysine isopeptide (Lys-Gly) (interchain with G-Cter in SUMO2). Residues K167 and K220 each participate in a glycyl lysine isopeptide (Lys-Gly) (interchain with G-Cter in SUMO2) cross-link. The LIM zinc-binding 4 domain occupies 221–275 (CAGCTNPISGLGGTKYISFEERQWHNDCFNCKKCSLSLVGRGFLTERDDILCPDC). S238 is subject to Phosphoserine.

Interacts with ZNF638 and TTN/titin. Interacts with E4F1. Interacts with GRB7. Interacts with SIRT1 and FOXO1. Interacts with CEFIP. Interacts with calcineurin. Interacts with FOXK1. In terms of tissue distribution, expressed in skeletal muscle and heart.

It localises to the cytoplasm. The protein localises to the nucleus. The protein resides in the myofibril. It is found in the sarcomere. Its subcellular location is the z line. Functionally, may function as a molecular transmitter linking various signaling pathways to transcriptional regulation. Negatively regulates the transcriptional repressor E4F1 and may function in cell growth. Inhibits the transcriptional activity of FOXO1 and its apoptotic function by enhancing the interaction of FOXO1 with SIRT1 and FOXO1 deacetylation. Negatively regulates the calcineurin/NFAT signaling pathway in cardiomyocytes. The protein is Four and a half LIM domains protein 2 (FHL2) of Homo sapiens (Human).